A 1411-amino-acid chain; its full sequence is DNA-directed RNA polymerase subunit beta' (1411 aa).

Residues cysteine 69, cysteine 71, cysteine 84, and cysteine 87 each contribute to the Zn(2+) site. 3 residues coordinate Mg(2+): aspartate 461, aspartate 463, and aspartate 465. Residues cysteine 809, cysteine 883, cysteine 890, and cysteine 893 each coordinate Zn(2+).

It belongs to the RNA polymerase beta' chain family. The RNAP catalytic core consists of 2 alpha, 1 beta, 1 beta' and 1 omega subunit. When a sigma factor is associated with the core the holoenzyme is formed, which can initiate transcription. It depends on Mg(2+) as a cofactor. The cofactor is Zn(2+).

The catalysed reaction is RNA(n) + a ribonucleoside 5'-triphosphate = RNA(n+1) + diphosphate. Its function is as follows. DNA-dependent RNA polymerase catalyzes the transcription of DNA into RNA using the four ribonucleoside triphosphates as substrates. The sequence is that of DNA-directed RNA polymerase subunit beta' from Ehrlichia ruminantium (strain Gardel).